A 543-amino-acid chain; its full sequence is Formin-binding protein 1-like (543 aa).

The region spanning 1–263 is the F-BAR domain; sequence MSWGTELWDQ…AAKSVDERRD (263 aa). Coiled coils occupy residues 66 to 258 and 334 to 426; these read FTSC…AKSV and LEDF…QRSE. Residues 339–416 enclose the REM-1 domain; sequence HLPPEQRRKR…IHKNEGWLSE (78 aa). Residues 424–467 form a disordered region; the sequence is RSERRHSAEANHLVAQGRESPEGSYTEDANQEGRVQPQHHAHPE. Residues 479–540 enclose the SH3 domain; sequence PAIGHCKSLY…PTSYIEITLE (62 aa).

The protein belongs to the FNBP1 family. In terms of assembly, homodimerizes, the dimers can polymerize end-to-end to form filamentous structures. Interacts with GTP-bound cdc42 and wasl/n-wasp.

It is found in the cytoplasm. Its subcellular location is the cytoskeleton. The protein localises to the cell cortex. The protein resides in the cytoplasmic vesicle. It localises to the cell membrane. In terms of biological role, required to coordinate membrane tubulation with reorganization of the actin cytoskeleton during endocytosis. Essential for autophagy of intracellular bacterial pathogens. Promotes cdc42-induced actin polymerization by activating the wasl-waspip complex, the predominant form of wasl/n-wasp in cells. The polypeptide is Formin-binding protein 1-like (fnbp1l) (Xenopus laevis (African clawed frog)).